The primary structure comprises 266 residues: rRNA adenine N-6-methyltransferase (266 aa).

Residues H14, T16, G41, E62, D87, and N103 each contribute to the S-adenosyl-L-methionine site.

Belongs to the class I-like SAM-binding methyltransferase superfamily. rRNA adenine N(6)-methyltransferase family.

Its function is as follows. Involved in erythromycin resistance. This chain is rRNA adenine N-6-methyltransferase (ermF), found in Bacteroides fragilis.